The chain runs to 250 residues: Galectin-3 (250 aa).

Positions 1–60 are disordered; that stretch reads MADNFSLHDALSGSGNPNPQGWPGAWGNQPAGAGGYPGASYPGAYPGQAPPGAYPGQAPP. Position 2 is an N-acetylalanine (Ala2). A phosphoserine mark is found at Ser6 and Ser12. Repeat copies occupy residues 36-44, 45-53, and 54-62. Residues 36-109 are 8 X 9 AA tandem repeats of Y-P-G-X(3)-P-G-A; it reads YPGASYPGAY…AYPATGPYGA (74 aa). Positions 38 to 47 are enriched in low complexity; sequence GASYPGAYPG. The span at 48–60 shows a compositional bias: pro residues; the sequence is QAPPGAYPGQAPP. Residues 63 to 69 form a 4; approximate repeat; that stretch reads YPGAPGA. Repeat 5 spans residues 70-78; sequence YPGAPAPGV. A 6; approximate repeat occupies 79–88; it reads YPGPPSGPGA. One copy of the 7; approximate repeat lies at 89-100; the sequence is YPSSGQPSATGA. An 8; approximate repeat occupies 101-109; that stretch reads YPATGPYGA. Residues 118–248 enclose the Galectin domain; the sequence is YNLPLPGGVV…DIDLTSASYT (131 aa). Residue 181–187 coordinates a beta-D-galactoside; the sequence is WGREERQ. The residue at position 188 (Ser188) is a Phosphoserine. A Nuclear export signal motif is present at residues 226 to 241; the sequence is KKLNEISKLGISGDID.

In terms of assembly, probably forms homo- or heterodimers. Interacts with DMBT1. Interacts with CD6 and ALCAM. Forms a complex with the ITGA3, ITGB1 and CSPG4. Interacts with LGALS3BP, LYPD3, ZFTRAF1 and UACA. Interacts with TRIM16; this interaction mediates autophagy of damage endomembranes. Interacts with cargo receptor TMED10; the interaction mediates the translocation from the cytoplasm into the ERGIC (endoplasmic reticulum-Golgi intermediate compartment) and thereby secretion. As to expression, a major expression is found in the colonic epithelium. It is also abundant in the activated macrophages. Expressed in fetal membranes.

The protein localises to the cytoplasm. Its subcellular location is the nucleus. It localises to the secreted. Functionally, galactose-specific lectin which binds IgE. May mediate with the alpha-3, beta-1 integrin the stimulation by CSPG4 of endothelial cells migration. Together with DMBT1, required for terminal differentiation of columnar epithelial cells during early embryogenesis. In the nucleus: acts as a pre-mRNA splicing factor. Involved in acute inflammatory responses including neutrophil activation and adhesion, chemoattraction of monocytes macrophages, opsonization of apoptotic neutrophils, and activation of mast cells. Together with TRIM16, coordinates the recognition of membrane damage with mobilization of the core autophagy regulators ATG16L1 and BECN1 in response to damaged endomembranes. This chain is Galectin-3, found in Homo sapiens (Human).